We begin with the raw amino-acid sequence, 295 residues long: Ankyrin repeat and SOCS box protein 17 (295 aa).

The ANK repeat unit spans residues 146–176 (SGITPLLYVAQTRQSNILKILLQYGILEREK). The SOCS box domain occupies 243–295 (DYIPPTRYKDPCELVHLCRITIRTQLLANNMLPNGIFSLLIPTRLQNFLNLES).

This sequence belongs to the ankyrin SOCS box (ASB) family. As to expression, specifically expressed in testis. Localizes to spermatogenic cells in testis, with highest expression in round spermatids and condensing spermatids and lower expression in pachytene spermatocytes.

It participates in protein modification; protein ubiquitination. May be a substrate-recognition component of a SCF-like ECS (Elongin-Cullin-SOCS-box protein) E3 ubiquitin-protein ligase complex which mediates the ubiquitination and subsequent proteasomal degradation of target proteins. This is Ankyrin repeat and SOCS box protein 17 (Asb17) from Mus musculus (Mouse).